Here is a 33-residue protein sequence, read N- to C-terminus: DNA-directed RNA polymerase subunit beta' (33 aa).

This sequence belongs to the RNA polymerase beta' chain family. RpoC1 subfamily. In plastids the minimal PEP RNA polymerase catalytic core is composed of four subunits: alpha, beta, beta', and beta''. When a (nuclear-encoded) sigma factor is associated with the core the holoenzyme is formed, which can initiate transcription.

It localises to the plastid. The protein resides in the chloroplast. The catalysed reaction is RNA(n) + a ribonucleoside 5'-triphosphate = RNA(n+1) + diphosphate. Functionally, DNA-dependent RNA polymerase catalyzes the transcription of DNA into RNA using the four ribonucleoside triphosphates as substrates. This chain is DNA-directed RNA polymerase subunit beta' (rpoC1), found in Heterosigma akashiwo (Chromophytic alga).